We begin with the raw amino-acid sequence, 116 residues long: Large ribosomal subunit protein bL20 (116 aa).

Belongs to the bacterial ribosomal protein bL20 family.

Binds directly to 23S ribosomal RNA and is necessary for the in vitro assembly process of the 50S ribosomal subunit. It is not involved in the protein synthesizing functions of that subunit. This chain is Large ribosomal subunit protein bL20, found in Acaryochloris marina (strain MBIC 11017).